The sequence spans 142 residues: MAKKVQAYVKLQVAAGMANPSPPVGPALGQQGVNIMEFCKAFNAKTESIEKGLPIPVVITVYSDRSFTFVTKTPPAAVLLKKAAGIKSGSGVPNKDKVGKVTSAQVREIAETKAADMTGSDVEAMMRSIEGTAHSMGLVVEG.

Belongs to the universal ribosomal protein uL11 family. Part of the ribosomal stalk of the 50S ribosomal subunit. Interacts with L10 and the large rRNA to form the base of the stalk. L10 forms an elongated spine to which L12 dimers bind in a sequential fashion forming a multimeric L10(L12)X complex. One or more lysine residues are methylated.

In terms of biological role, forms part of the ribosomal stalk which helps the ribosome interact with GTP-bound translation factors. In Yersinia pestis bv. Antiqua (strain Angola), this protein is Large ribosomal subunit protein uL11.